The following is a 451-amino-acid chain: Flagellum-specific ATP synthase (451 aa).

175 to 182 contacts ATP; sequence AGTGVGKS.

The protein belongs to the ATPase alpha/beta chains family.

The protein localises to the cytoplasm. It carries out the reaction ATP + H2O + 4 H(+)(in) = ADP + phosphate + 5 H(+)(out). Probable catalytic subunit of a protein translocase for flagellum-specific export, or a proton translocase involved in local circuits at the flagellum. The sequence is that of Flagellum-specific ATP synthase (fliI) from Pseudomonas aeruginosa (strain ATCC 15692 / DSM 22644 / CIP 104116 / JCM 14847 / LMG 12228 / 1C / PRS 101 / PAO1).